A 123-amino-acid polypeptide reads, in one-letter code: WAP four-disulfide core domain protein 5 (123 aa).

The N-terminal stretch at 1-24 is a signal peptide; it reads MRFWSLFLLVVLLAVGGQLPAASG. WAP domains are found at residues 27 to 74 and 75 to 121; these read KGER…VPRI and LVKR…RDPA. 8 disulfide bridges follow: C34–C62, C41–C66, C49–C61, C55–C70, C81–C109, C88–C113, C96–C108, and C102–C117.

Its subcellular location is the secreted. Putative acid-stable proteinase inhibitor. The protein is WAP four-disulfide core domain protein 5 (WFDC5) of Lemur catta (Ring-tailed lemur).